The following is a 356-amino-acid chain: Protein RecA (356 aa).

Residue 68 to 75 (GPESSGKT) coordinates ATP.

Belongs to the RecA family.

The protein localises to the cytoplasm. Its function is as follows. Can catalyze the hydrolysis of ATP in the presence of single-stranded DNA, the ATP-dependent uptake of single-stranded DNA by duplex DNA, and the ATP-dependent hybridization of homologous single-stranded DNAs. It interacts with LexA causing its activation and leading to its autocatalytic cleavage. In Clostridium botulinum (strain Eklund 17B / Type B), this protein is Protein RecA.